Reading from the N-terminus, the 488-residue chain is Ammonium transporter Rh type C-like 2 (488 aa).

Residues 1–21 (MGNCFGSRGICDRPKNTNIRL) lie on the Cytoplasmic side of the membrane. The chain crosses the membrane as a helical span at residues 22 to 42 (SLPAVCFVWQVSMIILFGVFV). The Extracellular portion of the chain corresponds to 43–73 (RYNEEADTNWVYTKKEKNITSDIENDFYFRY). An N-linked (GlcNAc...) asparagine glycan is attached at asparagine 60. Residues 74 to 94 (PSFQDVHVMIFVGFGFLMTFL) traverse the membrane as a helical segment. Residues 95–98 (KRYS) lie on the Cytoplasmic side of the membrane. A helical transmembrane segment spans residues 99-119 (FGAVGFNFLIAAFGLQWALLM). Over 120–139 (QGWFSPLGDDGKIKIGIENL) the chain is Extracellular. The helical transmembrane segment at 140-160 (INADFCVASCLIAYGAVLGKV) threads the bilayer. The Cytoplasmic portion of the chain corresponds to 161–162 (SP). A helical transmembrane segment spans residues 163–183 (VQLLVMTLFGITLYAVEEFII). Residues 184–191 (LRVLNAKD) lie on the Extracellular side of the membrane. The chain crosses the membrane as a helical span at residues 192 to 214 (AGGSMVIHTFGAYYGLSISRVLY). At 215–232 (RPNLNKSKHMNGSVYHSD) the chain is on the cytoplasmic side. A helical membrane pass occupies residues 233–253 (VFAMIGTLFLWMFWPSFNSAI). Residues 254-264 (CNHGDGQHRAA) lie on the Extracellular side of the membrane. A helical transmembrane segment spans residues 265–285 (INTYLALASTVLTTVAISSMF). Topologically, residues 286–298 (EKTGKLDMVHIQN) are cytoplasmic. The helical transmembrane segment at 299–319 (STLAGGVAVGTAAEFMLMPYG) threads the bilayer. A topological domain (extracellular) is located at residue serine 320. A helical membrane pass occupies residues 321 to 341 (LIVGFFCGIISTLGYIYLTPF). Residues 342-356 (LEERLKIQDTCGIHN) are Cytoplasmic-facing. Residues 357–377 (LHAMPGVIGGIVGAISAAAAS) traverse the membrane as a helical segment. At 378–409 (KEVYGDLGLKNIFSIEGSNVTRLPTVQGGYQA) the chain is on the extracellular side. Residues 410-430 (AALCVALCFGIGGGTFVGLVL) form a helical membrane-spanning segment. At 431 to 488 (KLPIWGDPADEHCFNDEMYWEVPEDEESIIPPVLSYNNHMIPNNKHEEMRETNFAEQS) the chain is on the cytoplasmic side.

This sequence belongs to the ammonium transporter (TC 2.A.49) family. Rh subfamily. Homotrimer. At larval stages, expressed only in the yolk sac and gill. However, the kidney and the gills are major sites of expression in adults.

It is found in the apical cell membrane. In terms of biological role, functions as an ammonia transporter. May play a role in the elimination of ammonia in the gill. In Danio rerio (Zebrafish), this protein is Ammonium transporter Rh type C-like 2 (rhcgl2).